Consider the following 813-residue polypeptide: LPS-assembly protein LptD (813 aa).

The N-terminal stretch at 1-22 (MRRALRLLPLPLSIAICLPAMA) is a signal peptide.

It belongs to the LptD family. In terms of assembly, component of the lipopolysaccharide transport and assembly complex. Interacts with LptE and LptA.

The protein localises to the cell outer membrane. Together with LptE, is involved in the assembly of lipopolysaccharide (LPS) at the surface of the outer membrane. This is LPS-assembly protein LptD from Xanthomonas axonopodis pv. citri (strain 306).